Consider the following 165-residue polypeptide: SsrA-binding protein (165 aa).

Positions Lys141–Tyr165 are disordered. Basic and acidic residues predominate over residues Lys145–Lys159.

It belongs to the SmpB family.

It is found in the cytoplasm. In terms of biological role, required for rescue of stalled ribosomes mediated by trans-translation. Binds to transfer-messenger RNA (tmRNA), required for stable association of tmRNA with ribosomes. tmRNA and SmpB together mimic tRNA shape, replacing the anticodon stem-loop with SmpB. tmRNA is encoded by the ssrA gene; the 2 termini fold to resemble tRNA(Ala) and it encodes a 'tag peptide', a short internal open reading frame. During trans-translation Ala-aminoacylated tmRNA acts like a tRNA, entering the A-site of stalled ribosomes, displacing the stalled mRNA. The ribosome then switches to translate the ORF on the tmRNA; the nascent peptide is terminated with the 'tag peptide' encoded by the tmRNA and targeted for degradation. The ribosome is freed to recommence translation, which seems to be the essential function of trans-translation. The chain is SsrA-binding protein from Prochlorococcus marinus (strain MIT 9313).